We begin with the raw amino-acid sequence, 619 residues long: Mitogen-activated protein kinase kinase kinase 2 (619 aa).

A disordered region spans residues Leu-25 to Arg-45. Ser-26 carries the post-translational modification Phosphoserine. Residues Asp-43 to Asn-122 form the PB1 domain. 3 positions are modified to phosphoserine: Ser-153, Ser-159, and Ser-164. 3 disordered regions span residues Ile-154 to Glu-173, Leu-201 to Ser-248, and Arg-289 to Asn-355. A compositionally biased stretch (low complexity) spans Pro-203–Ser-219. Phosphoserine occurs at positions 239, 297, 311, 331, 344, and 349. The span at Thr-290 to Val-299 shows a compositional bias: polar residues. Positions Ser-300–Ser-315 are enriched in low complexity. The segment covering Asp-322–Asp-332 has biased composition (basic and acidic residues). The 261-residue stretch at Arg-357 to His-617 folds into the Protein kinase domain. ATP-binding positions include Leu-362 to Tyr-371 and Lys-385. Asp-483 (proton acceptor) is an active-site residue.

Belongs to the protein kinase superfamily. STE Ser/Thr protein kinase family. MAP kinase kinase kinase subfamily. Interacts with PKN2; the interaction activates PKN2 kinase activity in a MAP3K2-independent kinase activity. Self-associates. Binds both upstream activators and downstream substrates in multimolecular complexes. Interacts (via the kinase catalytic domain) with STK38. Interacts with XIAP/BIRC4. Requires Mg(2+) as cofactor. In terms of processing, autophosphorylated. Post-translationally, ubiquitination by XIAP/BIRC4 does not lead to proteasomal degradation.

It is found in the cytoplasm. The protein resides in the nucleus. The enzyme catalyses L-seryl-[protein] + ATP = O-phospho-L-seryl-[protein] + ADP + H(+). It catalyses the reaction L-threonyl-[protein] + ATP = O-phospho-L-threonyl-[protein] + ADP + H(+). Activated by phosphorylation on Thr-524. Functionally, component of a protein kinase signal transduction cascade. Regulates the JNK and ERK5 pathways by phosphorylating and activating MAP2K5 and MAP2K7. Plays a role in caveolae kiss-and-run dynamics. In Homo sapiens (Human), this protein is Mitogen-activated protein kinase kinase kinase 2 (MAP3K2).